We begin with the raw amino-acid sequence, 232 residues long: 6-phosphogluconolactonase (232 aa).

It belongs to the glucosamine/galactosamine-6-phosphate isomerase family. 6-phosphogluconolactonase subfamily.

The enzyme catalyses 6-phospho-D-glucono-1,5-lactone + H2O = 6-phospho-D-gluconate + H(+). Its pathway is carbohydrate degradation; pentose phosphate pathway; D-ribulose 5-phosphate from D-glucose 6-phosphate (oxidative stage): step 2/3. In terms of biological role, hydrolysis of 6-phosphogluconolactone to 6-phosphogluconate. This Caulobacter vibrioides (strain ATCC 19089 / CIP 103742 / CB 15) (Caulobacter crescentus) protein is 6-phosphogluconolactonase (pgl).